The chain runs to 185 residues: Riboflavin kinase (185 aa).

Mg(2+)-binding residues include T41 and N43. E122 functions as the Nucleophile in the catalytic mechanism.

It belongs to the flavokinase family. The cofactor is Zn(2+). Mg(2+) serves as cofactor.

It carries out the reaction riboflavin + ATP = FMN + ADP + H(+). The protein operates within cofactor biosynthesis; FMN biosynthesis; FMN from riboflavin (ATP route): step 1/1. Catalyzes the phosphorylation of riboflavin (vitamin B2) to form flavin mononucleotide (FMN) coenzyme. The chain is Riboflavin kinase (FMN1) from Kluyveromyces lactis (strain ATCC 8585 / CBS 2359 / DSM 70799 / NBRC 1267 / NRRL Y-1140 / WM37) (Yeast).